Reading from the N-terminus, the 271-residue chain is Energy-coupling factor transporter ATP-binding protein EcfA (271 aa).

Residues 2-231 enclose the ABC transporter domain; the sequence is ISIQNLTFYY…PLFLQQYKLN (230 aa). 34–41 contacts ATP; the sequence is GHNGSGKS.

It belongs to the ABC transporter superfamily. Energy-coupling factor EcfA family. In terms of assembly, forms a stable energy-coupling factor (ECF) transporter complex composed of 2 membrane-embedded substrate-binding proteins (S component), 2 ATP-binding proteins (A component) and 2 transmembrane proteins (T component).

The protein localises to the cell membrane. Its function is as follows. ATP-binding (A) component of a common energy-coupling factor (ECF) ABC-transporter complex. Unlike classic ABC transporters this ECF transporter provides the energy necessary to transport a number of different substrates. In Onion yellows phytoplasma (strain OY-M), this protein is Energy-coupling factor transporter ATP-binding protein EcfA.